A 226-amino-acid chain; its full sequence is Ribosomal RNA small subunit methyltransferase Nep1 (226 aa).

S-adenosyl-L-methionine is bound by residues Gly-176, Gly-181, and 197–202; that span reads IYEESL.

Belongs to the class IV-like SAM-binding methyltransferase superfamily. RNA methyltransferase NEP1 family. Homodimer.

It carries out the reaction a pseudouridine in rRNA + S-adenosyl-L-methionine = an N(1)-methylpseudouridine in rRNA + S-adenosyl-L-homocysteine + H(+). Functionally, methyltransferase involved in ribosomal biogenesis. Specifically catalyzes the N1-methylation of the pseudouridine corresponding to position 914 in M.jannaschii 16S rRNA. The sequence is that of Ribosomal RNA small subunit methyltransferase Nep1 from Methanothrix thermoacetophila (strain DSM 6194 / JCM 14653 / NBRC 101360 / PT) (Methanosaeta thermophila).